The chain runs to 123 residues: PCNA-associated factor (123 aa).

The segment at 1 to 123 (MVRTKADCAG…SEEAADSGDE (123 aa)) is disordered. Residues 26–37 (RKTFGSSSSGSN) carry the D-box motif. The PIP-box motif lies at 66–77 (QKGIGDFFGSPS). Residues 83 to 85 (KEN) carry the KEN box motif. Residues 93–105 (EAGGSGAGKKPRK) carry the Initiation motif motif. Positions 113-123 (PSEEAADSGDE) are enriched in acidic residues.

As to quaternary structure, interacts with pcna.

Its subcellular location is the nucleus. The protein resides in the cytoplasm. The protein localises to the perinuclear region. Functionally, PCNA-binding protein that acts as a regulator of DNA repair during DNA replication. Following DNA damage, the interaction with pcna is disrupted, facilitating the interaction between monoubiquitinated pcna and the translesion DNA synthesis DNA polymerase eta (polh) at stalled replisomes, facilitating the bypass of replication-fork-blocking lesions. Also acts as a regulator of centrosome number. The protein is PCNA-associated factor of Xenopus laevis (African clawed frog).